A 200-amino-acid chain; its full sequence is Signal peptidase complex catalytic subunit SEC11 (200 aa).

Residues 1 to 15 (MFAELAPYLSNPRQT) are Cytoplasmic-facing. Residues 16–33 (LAQLLNFALVLSTAFMGW) form a helical; Signal-anchor for type II membrane protein membrane-spanning segment. Residues 34 to 200 (KALSVYTNSS…MGVMVMLQRE (167 aa)) lie on the Lumenal side of the membrane. An N-linked (GlcNAc...) asparagine glycan is attached at Asn41. Active-site charge relay system residues include Ser53 and His92. The segment at 101-134 (GDGGKKSQRRLEREADKRSGPGLSSPVSHQMLTK) is disordered. Over residues 103–119 (GGKKSQRRLEREADKRS) the composition is skewed to basic and acidic residues. The active-site Charge relay system is Asp142. The interval 186–197 (VLLGIMGVMVML) is C-terminal short (CTS) helix.

The protein belongs to the peptidase S26B family. In terms of assembly, component of the signal peptidase complex (SPC) composed of a catalytic subunit SEC11 and three accessory subunits SPC1, SPC2 and SPC3. The complex induces a local thinning of the ER membrane which is used to measure the length of the signal peptide (SP) h-region of protein substrates. This ensures the selectivity of the complex towards h-regions shorter than 18-20 amino acids. SPC associates with the translocon complex.

It is found in the endoplasmic reticulum membrane. It catalyses the reaction Cleavage of hydrophobic, N-terminal signal or leader sequences from secreted and periplasmic proteins.. In terms of biological role, catalytic component of the signal peptidase complex (SPC) which catalyzes the cleavage of N-terminal signal sequences from nascent proteins as they are translocated into the lumen of the endoplasmic reticulum. Specifically cleaves N-terminal signal peptides that contain a hydrophobic alpha-helix (h-region) shorter than 18-20 amino acids. The sequence is that of Signal peptidase complex catalytic subunit SEC11 (SEC11) from Arthroderma benhamiae (strain ATCC MYA-4681 / CBS 112371) (Trichophyton mentagrophytes).